The sequence spans 509 residues: Maturase K (509 aa).

It belongs to the intron maturase 2 family. MatK subfamily.

Its subcellular location is the plastid. The protein localises to the chloroplast. Functionally, usually encoded in the trnK tRNA gene intron. Probably assists in splicing its own and other chloroplast group II introns. This chain is Maturase K, found in Nicotiana bigelovii (Bigelov's tobacco).